The following is a 345-amino-acid chain: Aminopeptidase YpdE (345 aa).

Residues H62 and D166 each coordinate a divalent metal cation. The active-site Proton acceptor is E198. Residues E199, D221, and H308 each coordinate a divalent metal cation.

The protein belongs to the peptidase M42 family. Co(2+) is required as a cofactor. It depends on Ni(2+) as a cofactor. The cofactor is Mn(2+). Cu(2+) serves as cofactor.

Functionally, has a broad aminopeptidase activity on non-blocked peptides by progressively cleaving amino acids off the peptide substrate. Aminopeptidase activity stops at the residue before the first proline in the peptide. Cannot cleave when proline is the first N-terminal residue. This is Aminopeptidase YpdE (ypdE) from Escherichia coli (strain K12).